The sequence spans 157 residues: Phosphomannomutase (157 aa).

Catalysis depends on serine 98, which acts as the Phosphoserine intermediate. Serine 98 serves as a coordination point for Mg(2+).

This sequence belongs to the phosphohexose mutase family. Mg(2+) serves as cofactor.

It catalyses the reaction alpha-D-mannose 1-phosphate = D-mannose 6-phosphate. Its pathway is nucleotide-sugar biosynthesis; GDP-alpha-D-mannose biosynthesis; alpha-D-mannose 1-phosphate from D-fructose 6-phosphate: step 2/2. It functions in the pathway capsule biogenesis; capsule polysaccharide biosynthesis. Its function is as follows. Involved in the biosynthesis of the K2 capsular polysaccharide biosynthesis. The polypeptide is Phosphomannomutase (manB) (Klebsiella pneumoniae).